The primary structure comprises 396 residues: Aspartate aminotransferase (396 aa).

L-aspartate is bound by residues Gly-34, Trp-130, and Asn-183. Lys-246 bears the N6-(pyridoxal phosphate)lysine mark. Arg-374 contributes to the L-aspartate binding site.

This sequence belongs to the class-I pyridoxal-phosphate-dependent aminotransferase family. Homodimer. Pyridoxal 5'-phosphate serves as cofactor.

The protein localises to the cytoplasm. The catalysed reaction is L-aspartate + 2-oxoglutarate = oxaloacetate + L-glutamate. This is Aspartate aminotransferase (aspC) from Haemophilus influenzae (strain ATCC 51907 / DSM 11121 / KW20 / Rd).